The following is a 464-amino-acid chain: Protein FAM90A20 (464 aa).

Disordered stretches follow at residues 16–42 (RAQTLQKQRRAPVGPRAPPPDEEDPRL), 71–213 (ATLG…IPRP), 228–247 (PTHSSPEGSCREVPQAASKT), 254–273 (VRTQAQDKRPAVTSQPCPSA), 309–389 (RLGP…HDGA), and 418–437 (EKPGAFLAQSPHVSEKSEAP). Composition is skewed to basic and acidic residues over residues 74 to 83 (GKKEGKENLK) and 97 to 114 (NKDKGEKEERPRQQDPQR). Low complexity predominate over residues 180 to 197 (LASLSPLRKASLSSSSSL).

Belongs to the FAM90 family.

The polypeptide is Protein FAM90A20 (Homo sapiens (Human)).